We begin with the raw amino-acid sequence, 406 residues long: Ribose-phosphate pyrophosphokinase 3, mitochondrial (406 aa).

The disordered stretch occupies residues 1–32 (MAATPHRHLLQPCKNPAISSSETLKPSSSFSL). The transit peptide at 1 to 87 (MAATPHRHLL…RRFQMSSNQE (87 aa)) directs the protein to the mitochondrion. Positions 18 to 32 (ISSSETLKPSSSFSL) are enriched in low complexity. Positions 226 and 228 each coordinate Mg(2+). Positions 309–324 (GRHVVIVDDLVQSGGT) are binding of phosphoribosylpyrophosphate.

The protein belongs to the ribose-phosphate pyrophosphokinase family.

The protein resides in the mitochondrion. The enzyme catalyses D-ribose 5-phosphate + ATP = 5-phospho-alpha-D-ribose 1-diphosphate + AMP + H(+). The sequence is that of Ribose-phosphate pyrophosphokinase 3, mitochondrial (PRS3) from Spinacia oleracea (Spinach).